The following is a 751-amino-acid chain: Kelch-like protein 1 (751 aa).

Composition is skewed to low complexity over residues 25-36 (PSPASSSPAGGS) and 74-90 (SSSSSSSSSSSSSASSS). Disordered stretches follow at residues 25 to 54 (PSPASSSPAGGSCLQQDSGGGSFEHWGPSQ), 69 to 98 (FWKKPSSSSSSSSSSSSSASSSPFNPLNGT), and 157 to 184 (SSIQATGEGCGHRLTSTNHSLTPQSDLD). Polar residues predominate over residues 170 to 184 (LTSTNHSLTPQSDLD). The 68-residue stretch at 215–282 (CDVILIVGNR…AYTGCLELKE (68 aa)) folds into the BTB domain. Kelch repeat units lie at residues 463-509 (TLYA…VIDD), 510-556 (KLFV…VLEG), 558-603 (IYAV…ALNG), 604-650 (KLYS…TCDG), 652-703 (LYAV…LLGD), and 704-750 (RLYA…VIKQ).

In terms of tissue distribution, highly expressed in brain.

It localises to the cytoplasm. The protein localises to the cytoskeleton. May play a role in organizing the actin cytoskeleton of the brain cells. In Mus musculus (Mouse), this protein is Kelch-like protein 1 (Klhl1).